The sequence spans 500 residues: Putative (R)-citramalate synthase CimA (500 aa).

In terms of domain architecture, Pyruvate carboxyltransferase spans 9–258 (LRFFDTTLRD…DTRIRTERLY (250 aa)).

It belongs to the alpha-IPM synthase/homocitrate synthase family. As to quaternary structure, homodimer.

It carries out the reaction pyruvate + acetyl-CoA + H2O = (3R)-citramalate + CoA + H(+). It functions in the pathway amino-acid biosynthesis; L-isoleucine biosynthesis; 2-oxobutanoate from pyruvate: step 1/3. Its function is as follows. Catalyzes the condensation of pyruvate and acetyl-coenzyme A to form (R)-citramalate. The polypeptide is Putative (R)-citramalate synthase CimA (Methanosphaerula palustris (strain ATCC BAA-1556 / DSM 19958 / E1-9c)).